We begin with the raw amino-acid sequence, 311 residues long: Ornithine carbamoyltransferase (311 aa).

Carbamoyl phosphate contacts are provided by residues 52 to 55 (STRT), Gln79, Arg103, and 129 to 132 (HPVQ). L-ornithine is bound by residues Asn167, Asp226, and 230–231 (SM). Carbamoyl phosphate is bound by residues 266-267 (CL) and Arg294.

This sequence belongs to the aspartate/ornithine carbamoyltransferase superfamily. OTCase family.

The protein localises to the cytoplasm. It carries out the reaction carbamoyl phosphate + L-ornithine = L-citrulline + phosphate + H(+). Its pathway is amino-acid biosynthesis; L-arginine biosynthesis; L-arginine from L-ornithine and carbamoyl phosphate: step 1/3. In terms of biological role, reversibly catalyzes the transfer of the carbamoyl group from carbamoyl phosphate (CP) to the N(epsilon) atom of ornithine (ORN) to produce L-citrulline. In Sorangium cellulosum (strain So ce56) (Polyangium cellulosum (strain So ce56)), this protein is Ornithine carbamoyltransferase.